A 58-amino-acid chain; its full sequence is Large ribosomal subunit protein uL30 (58 aa).

Belongs to the universal ribosomal protein uL30 family. Part of the 50S ribosomal subunit.

The chain is Large ribosomal subunit protein uL30 from Blochmanniella floridana.